A 274-amino-acid chain; its full sequence is Diaminopimelate epimerase (274 aa).

Substrate-binding residues include Asn11, Gln44, and Asn64. The active-site Proton donor is the Cys73. Substrate is bound by residues 74–75, Asn157, Asn190, and 208–209; these read GN and ER. Residue Cys217 is the Proton acceptor of the active site. A substrate-binding site is contributed by 218-219; it reads GS.

Belongs to the diaminopimelate epimerase family. Homodimer.

The protein resides in the cytoplasm. It carries out the reaction (2S,6S)-2,6-diaminopimelate = meso-2,6-diaminopimelate. It functions in the pathway amino-acid biosynthesis; L-lysine biosynthesis via DAP pathway; DL-2,6-diaminopimelate from LL-2,6-diaminopimelate: step 1/1. Its function is as follows. Catalyzes the stereoinversion of LL-2,6-diaminopimelate (L,L-DAP) to meso-diaminopimelate (meso-DAP), a precursor of L-lysine and an essential component of the bacterial peptidoglycan. This chain is Diaminopimelate epimerase, found in Sodalis glossinidius (strain morsitans).